A 137-amino-acid polypeptide reads, in one-letter code: Large ribosomal subunit protein uL16 (137 aa).

A compositionally biased stretch (basic residues) spans Met1–Asn17. Positions Met1–Gly24 are disordered.

This sequence belongs to the universal ribosomal protein uL16 family. As to quaternary structure, part of the 50S ribosomal subunit.

Binds 23S rRNA and is also seen to make contacts with the A and possibly P site tRNAs. This Dichelobacter nodosus (strain VCS1703A) protein is Large ribosomal subunit protein uL16.